The chain runs to 249 residues: MTKDETLLVFTLVVSSVSVFLFGILLFMVLISATRDFRERTKSKLVKIMIWAGIVVITFAIAVRIYPIFIFLLKERIKPLVEALYDKLPWIWEVSLSRYWDRLIDFLDRYLWACAQRIQTGIRKQKGEFVVTFSCRVKKRLYARAIEVGIHLSLLSNLFWILKTTLAVGYRLLWVLYYIISFEGFLGSFRLYLVYFGFYCLLFSGKWLRTSEDRGERQAQISGILLRGMLIECAFSVLCLEEDSNLHAL.

The protein belongs to the ycf73 family.

It localises to the plastid. It is found in the chloroplast. This is an uncharacterized protein from Oryza sativa (Rice).